Here is a 160-residue protein sequence, read N- to C-terminus: Large ribosomal subunit protein eL21 (160 aa).

Composition is skewed to basic and acidic residues over residues N112–G123 and R136–G145. A disordered region spans residues N112–G145.

It belongs to the eukaryotic ribosomal protein eL21 family. In terms of assembly, component of the large ribosomal subunit.

It localises to the cytoplasm. The protein resides in the cytosol. It is found in the endoplasmic reticulum. Functionally, component of the large ribosomal subunit. The ribosome is a large ribonucleoprotein complex responsible for the synthesis of proteins in the cell. The protein is Large ribosomal subunit protein eL21 (RPL21) of Oryctolagus cuniculus (Rabbit).